Here is a 609-residue protein sequence, read N- to C-terminus: Ovochymase-2 (609 aa).

The signal sequence occupies residues 1-22 (MPISKDKLILILGMVCLEQGHS). Residues 23–51 (ETLSSIRNPDCGQSLVKPQPQNYFSLFSR) constitute a propeptide, activation peptide. One can recognise a Peptidase S1 domain in the interval 52–299 (IVGGSQVEKG…VLPWILKHIQ (248 aa)). Cys77 and Cys93 are oxidised to a cystine. The active-site Charge relay system is His92. Asn104 carries N-linked (GlcNAc...) asparagine glycosylation. Glu119 provides a ligand contact to Ca(2+). Residue Asp142 is the Charge relay system of the active site. 4 cysteine pairs are disulfide-bonded: Cys176–Cys246, Cys207–Cys225, Cys236–Cys265, and Cys311–Cys341. Ser240 (charge relay system) is an active-site residue. CUB domains are found at residues 311-421 (CSEP…YKAL) and 431-543 (CRSL…ISFI). Asn356 is a glycosylation site (N-linked (GlcNAc...) asparagine). Cys365 and Cys384 form a disulfide bridge. An N-linked (GlcNAc...) asparagine glycan is attached at Asn415. Intrachain disulfides connect Cys431–Cys458 and Cys485–Cys506. Asn530 and Asn549 each carry an N-linked (GlcNAc...) asparagine glycan. Residues 580–609 (HTKPPYEEDIGEMPAIDSGLLKQGERRGKH) form a disordered region.

The protein belongs to the peptidase S1 family. In terms of tissue distribution, only expressed in uterus tissue. Expressed in the initial segment (IS) of the caput epididymis, the region most proximal to the testis.

It is found in the secreted. In terms of biological role, may be required for sperm ADAM3 processing and consequential sperm fertilizing ability. In vitro, has an endopeptidase activity. The protein is Ovochymase-2 of Mus musculus (Mouse).